The following is a 342-amino-acid chain: Guanine nucleotide-binding protein alpha-9 subunit (342 aa).

G2 is lipidated: N-myristoyl glycine. A lipid anchor (S-palmitoyl cysteine) is attached at C3. A G-alpha domain is found at 28-342 (REIKLLLLGS…IIQSILKLHY (315 aa)). Residues 31 to 44 (KLLLLGSGDSGKST) form a G1 motif region. Residues 36-43 (GSGDSGKS), 167-173 (LRCRQRT), 192-196 (DVGGQ), 261-264 (NKND), and A316 contribute to the GTP site. S43 and T173 together coordinate Mg(2+). The G2 motif stretch occupies residues 165 to 173 (DVLRCRQRT). Positions 188-197 (FRLIDVGGQK) are G3 motif. Residues 257 to 264 (VLFLNKND) are G4 motif. The G5 motif stretch occupies residues 314–319 (TTATDT).

Belongs to the G-alpha family. As to quaternary structure, g proteins are composed of 3 units; alpha, beta and gamma. The alpha chain contains the guanine nucleotide binding site.

In terms of biological role, guanine nucleotide-binding proteins (G proteins) are involved as modulators or transducers in various transmembrane signaling systems. G alpha-9 antagonizes broad chemotactic response. It functions rapidly following receptor stimulation to negatively regulate PI3K/PTEN, adenylyl cyclase, and guanylyl cyclase pathways. In Dictyostelium discoideum (Social amoeba), this protein is Guanine nucleotide-binding protein alpha-9 subunit (gpaI).